Reading from the N-terminus, the 200-residue chain is LexA repressor (200 aa).

The segment at residues 28-48 is a DNA-binding region (H-T-H motif); the sequence is RAEIAEILGFKSANAAEEHLK. Residues Ser-118 and Lys-155 each act as for autocatalytic cleavage activity in the active site.

This sequence belongs to the peptidase S24 family. In terms of assembly, homodimer.

It catalyses the reaction Hydrolysis of Ala-|-Gly bond in repressor LexA.. Functionally, represses a number of genes involved in the response to DNA damage (SOS response), including recA and lexA. In the presence of single-stranded DNA, RecA interacts with LexA causing an autocatalytic cleavage which disrupts the DNA-binding part of LexA, leading to derepression of the SOS regulon and eventually DNA repair. The protein is LexA repressor of Teredinibacter turnerae (strain ATCC 39867 / T7901).